Consider the following 982-residue polypeptide: NACHT, LRR and PYD domains-containing protein 4C (982 aa).

Positions 1 to 93 (MASFFSDFGL…MERAGREIAG (93 aa)) constitute a Pyrin domain. Positions 148 to 471 (HMVFLQGAAG…FYLLKSHMDH (324 aa)) constitute an NACHT domain. ATP is bound at residue 154–161 (GAAGIGKS). LRR repeat units follow at residues 594–617 (CSTL…HSYT), 689–716 (NQCL…VLSQ), 746–773 (SKML…LCHP), 802–825 (NKTL…VLCG), 827–844 (LSLP…YCLI), 859–882 (NQNL…LLCD), and 916–940 (CKTL…LFEA).

It belongs to the NLRP family.

May be involved in inflammation and recognition of cytosolic pathogen-associated molecular patterns (PAMPs) not intercepted by membrane-bound receptors. In Mus musculus (Mouse), this protein is NACHT, LRR and PYD domains-containing protein 4C (Nlrp4c).